Reading from the N-terminus, the 1691-residue chain is Collagen alpha-6(IV) chain (1691 aa).

A signal peptide spans 1–22 (MLINKLWLLLVTLCLTEELAAA). The 7S domain stretch occupies residues 23–46 (GEKSYGKPCGGQDCSGSCQCFPEK). Residues 47 to 1463 (GARGRPGPIG…FGMPGMPGQS (1417 aa)) form a triple-helical region region. 5 disordered regions span residues 108 to 338 (IPGH…EGQK), 404 to 473 (GFPG…LGLK), 486 to 881 (GGVP…KGSP), 915 to 1099 (GIPG…KGRD), and 1185 to 1459 (THGT…MPGM). Asn-127 carries an N-linked (GlcNAc...) asparagine glycan. Over residues 185-197 (PQGAPGFPGAVGP) the composition is skewed to low complexity. Positions 198–213 (AGPPGLQGPPGPPGPL) are enriched in pro residues. Low complexity-rich tracts occupy residues 311 to 320 (QGPPGQQGKK) and 421 to 431 (GAAGLPGRDGL). 2 stretches are compositionally biased toward pro residues: residues 432–443 (PGPPGPPGPPSP) and 491–502 (TGPPGEPGPPGP). Residues 503-512 (WGLIGLPGLK) show a composition bias toward low complexity. A Cell attachment site motif is present at residues 515–517 (RGD). A compositionally biased stretch (low complexity) spans 526 to 541 (PAGAPGLVGPLGPSGP). The short motif at 560-562 (RGD) is the Cell attachment site element. Over residues 588 to 599 (GLPGDGGQGFPG) the composition is skewed to gly residues. Low complexity-rich tracts occupy residues 641–652 (LPGQQGLPGSKG), 660–703 (PGSY…GSPG), 722–735 (LPGF…DGLP), and 802–820 (SPGT…SSGP). Basic residues predominate over residues 842 to 851 (PGKKGTRGKK). Low complexity predominate over residues 853-878 (PPGSIVKKGLPGLKGLPGNPGLVGLK). Positions 986–988 (RGD) match the Cell attachment site motif. Positions 1055-1068 (SPGLPGASGLPGLK) are enriched in low complexity. Residues 1210 to 1220 (GYPGIGIGAPG) are compositionally biased toward gly residues. Low complexity predominate over residues 1234–1253 (PGLQGPAGLPGAPGISLPSL). A compositionally biased stretch (pro residues) spans 1275 to 1284 (PAGPPGPPGP). Residues 1360–1371 (SGLQGDPGQTPT) are compositionally biased toward polar residues. Low complexity-rich tracts occupy residues 1384-1397 (LPGI…TGDP) and 1429-1459 (ALGD…MPGM). The region spanning 1467 to 1691 (GYTLVKHSQS…SRCQVCMKSL (225 aa)) is the Collagen IV NC1 domain. 6 cysteine pairs are disulfide-bonded: Cys-1482-Cys-1571, Cys-1515-Cys-1568, Cys-1527-Cys-1533, Cys-1590-Cys-1687, Cys-1624-Cys-1684, and Cys-1636-Cys-1643.

Belongs to the type IV collagen family. There are six type IV collagen isoforms, alpha 1(IV)-alpha 6(IV), each of which can form a triple helix structure with 2 other chains to generate type IV collagen network. Post-translationally, prolines at the third position of the tripeptide repeating unit (G-X-Y) are hydroxylated in some or all of the chains. Type IV collagens contain numerous cysteine residues which are involved in inter- and intramolecular disulfide bonding. 12 of these, located in the NC1 domain, are conserved in all known type IV collagens. In terms of processing, the trimeric structure of the NC1 domains is stabilized by covalent bonds between Lys and Met residues.

The protein resides in the secreted. Its subcellular location is the extracellular space. It localises to the extracellular matrix. The protein localises to the basement membrane. Its function is as follows. Type IV collagen is the major structural component of glomerular basement membranes (GBM), forming a 'chicken-wire' meshwork together with laminins, proteoglycans and entactin/nidogen. The protein is Collagen alpha-6(IV) chain (COL4A6) of Homo sapiens (Human).